A 914-amino-acid polypeptide reads, in one-letter code: Beta-mannosidase A (914 aa).

A signal peptide spans Met-1–Gly-20. N-linked (GlcNAc...) asparagine glycosylation is found at Asn-39, Asn-79, Asn-230, Asn-265, Asn-299, Asn-309, and Asn-330. Residue Glu-462 is the Proton donor of the active site. N-linked (GlcNAc...) asparagine glycans are attached at residues Asn-591, Asn-614, Asn-641, Asn-721, Asn-744, Asn-773, Asn-784, and Asn-909.

The protein belongs to the glycosyl hydrolase 2 family. Beta-mannosidase A subfamily. As to quaternary structure, homodimer.

It localises to the secreted. It carries out the reaction Hydrolysis of terminal, non-reducing beta-D-mannose residues in beta-D-mannosides.. It functions in the pathway glycan metabolism; N-glycan degradation. Functionally, exoglycosidase that cleaves the single beta-linked mannose residue from the non-reducing end of beta-mannosidic oligosaccharides of various complexity and length. Involved in the degradation of polymeric mannan and galactomannan. In Aspergillus oryzae (strain ATCC 42149 / RIB 40) (Yellow koji mold), this protein is Beta-mannosidase A (mndA).